The chain runs to 138 residues: Large ribosomal subunit protein uL16 (138 aa).

Basic residues predominate over residues 1 to 13 (MLQPARRKYRKEQ). Positions 1–22 (MLQPARRKYRKEQKGRNTGVAT) are disordered.

This sequence belongs to the universal ribosomal protein uL16 family. Part of the 50S ribosomal subunit.

Its function is as follows. Binds 23S rRNA and is also seen to make contacts with the A and possibly P site tRNAs. This is Large ribosomal subunit protein uL16 from Paracidovorax citrulli (strain AAC00-1) (Acidovorax citrulli).